Reading from the N-terminus, the 253-residue chain is Pimeloyl-[acyl-carrier protein] methyl ester esterase (253 aa).

Substrate is bound by residues Trp-18, 78 to 79 (SL), and 139 to 143 (FLALD). Ser-78 serves as the catalytic Nucleophile. Residues Asp-203 and His-231 contribute to the active site. His-231 lines the substrate pocket.

It belongs to the AB hydrolase superfamily. Carboxylesterase BioH family. Monomer.

The protein resides in the cytoplasm. It catalyses the reaction 6-carboxyhexanoyl-[ACP] methyl ester + H2O = 6-carboxyhexanoyl-[ACP] + methanol + H(+). The protein operates within cofactor biosynthesis; biotin biosynthesis. Its function is as follows. The physiological role of BioH is to remove the methyl group introduced by BioC when the pimeloyl moiety is complete. It allows to synthesize pimeloyl-ACP via the fatty acid synthetic pathway through the hydrolysis of the ester bonds of pimeloyl-ACP esters. This is Pimeloyl-[acyl-carrier protein] methyl ester esterase from Xanthomonas oryzae pv. oryzae (strain MAFF 311018).